A 217-amino-acid chain; its full sequence is Small ribosomal subunit protein uS3c (217 aa).

One can recognise a KH type-2 domain in the interval 46–117 (VQKHIKNSSN…RLRMTLIEIA (72 aa)).

This sequence belongs to the universal ribosomal protein uS3 family. As to quaternary structure, part of the 30S ribosomal subunit.

The protein localises to the plastid. The protein resides in the chloroplast. This Marchantia polymorpha (Common liverwort) protein is Small ribosomal subunit protein uS3c (rps3).